A 218-amino-acid polypeptide reads, in one-letter code: MKADFWLQRWSAGQIGFHQSEVNKDLQQYWSSLNVVPGARVLVPLCGKSQDMSWLSGQGYHVVGAELSEAAVERYFTERGEQPHITSQGDFKVYAAPGIEIWCGDFFALTARDIGHCAAFYDRAAMIALPADMRERYVQHLEALMPQACSGLLITLEYDQALLEGPPFSVPQTWLHRVMSGNWEVTKVGGQDTLHSSARGLKAGLERMDEHVYVLERV.

Residues Trp-10, Leu-45, Glu-66, and Arg-123 each contribute to the S-adenosyl-L-methionine site.

The protein belongs to the class I-like SAM-binding methyltransferase superfamily. TPMT family.

It localises to the cytoplasm. The enzyme catalyses S-adenosyl-L-methionine + a thiopurine = S-adenosyl-L-homocysteine + a thiopurine S-methylether.. In terms of biological role, involved in the biological cycling of tellurium and selenium. Tellurium resistance (Ter) mechanism. The sequence is that of Thiopurine S-methyltransferase from Pseudomonas syringae pv. pisi.